A 3096-amino-acid chain; its full sequence is Cilia- and flagella-associated protein 54 (3096 aa).

The segment covering 1 to 45 has biased composition (low complexity); the sequence is MAAQGSPSSSPSDDSTTSGSLPELPPTSTATSRSPPESKGSSRSS. Disordered regions lie at residues 1 to 46 and 1248 to 1267; these read MAAQ…RSSL and SNEQEEMPEEDSSKKSLKTK.

It belongs to the CFAP54 family.

The protein localises to the cytoplasm. It is found in the cytoskeleton. It localises to the cilium axoneme. Required for assembly and function of cilia and flagella. In Homo sapiens (Human), this protein is Cilia- and flagella-associated protein 54.